A 342-amino-acid polypeptide reads, in one-letter code: MKKRIAIVLFNLGGPEDIEYVKPFLFNLFYDKAIINLPNPLRYVIAKIISIVRERKSQKIYSLIGRKSYLIQETEKQKLAITKKLKEILKEDFIIFISMRYSTPFAKEVICQIKEYNPSEIILLPLYPQFSSTTTGSSVKNFLQNIDIDIPIKTICCYPIEEDFIKAHVSIIKEKLYDKNFRILFSAHGLPKRIIKAGDPYSFQIKETVNKIVKELNIKDLDYKITYQSRVGPIEWLKPSTEYEIELAGKLKKDIIIVPISFVSEHVETLVELDIEYKFIADKYNIQYTRIPTLGTNKIFINSLTNILIRFINKTDTNLVMSSSSKRICPNKFTKCLCNLIN.

Positions 188 and 268 each coordinate Fe cation.

Belongs to the ferrochelatase family.

Its subcellular location is the cytoplasm. The enzyme catalyses heme b + 2 H(+) = protoporphyrin IX + Fe(2+). It participates in porphyrin-containing compound metabolism; protoheme biosynthesis; protoheme from protoporphyrin-IX: step 1/1. Catalyzes the ferrous insertion into protoporphyrin IX. The sequence is that of Ferrochelatase from Rickettsia typhi (strain ATCC VR-144 / Wilmington).